The following is a 258-amino-acid chain: Tryptophan synthase alpha chain (258 aa).

Catalysis depends on proton acceptor residues E52 and D63.

This sequence belongs to the TrpA family. Tetramer of two alpha and two beta chains.

The enzyme catalyses (1S,2R)-1-C-(indol-3-yl)glycerol 3-phosphate + L-serine = D-glyceraldehyde 3-phosphate + L-tryptophan + H2O. It participates in amino-acid biosynthesis; L-tryptophan biosynthesis; L-tryptophan from chorismate: step 5/5. Its function is as follows. The alpha subunit is responsible for the aldol cleavage of indoleglycerol phosphate to indole and glyceraldehyde 3-phosphate. The sequence is that of Tryptophan synthase alpha chain from Streptococcus pneumoniae serotype 4 (strain ATCC BAA-334 / TIGR4).